The sequence spans 140 residues: Small ribosomal subunit protein uS12 (140 aa).

3-methylthioaspartic acid is present on aspartate 102.

The protein belongs to the universal ribosomal protein uS12 family. As to quaternary structure, part of the 30S ribosomal subunit. Contacts proteins S8 and S17. May interact with IF1 in the 30S initiation complex.

In terms of biological role, with S4 and S5 plays an important role in translational accuracy. Interacts with and stabilizes bases of the 16S rRNA that are involved in tRNA selection in the A site and with the mRNA backbone. Located at the interface of the 30S and 50S subunits, it traverses the body of the 30S subunit contacting proteins on the other side and probably holding the rRNA structure together. The combined cluster of proteins S8, S12 and S17 appears to hold together the shoulder and platform of the 30S subunit. In Bacillus cereus (strain G9842), this protein is Small ribosomal subunit protein uS12.